A 146-amino-acid polypeptide reads, in one-letter code: Small ribosomal subunit protein uS9 (146 aa).

It belongs to the universal ribosomal protein uS9 family. As to quaternary structure, component of the small ribosomal subunit.

Its subcellular location is the cytoplasm. Functionally, component of the small ribosomal subunit. The ribosome is a large ribonucleoprotein complex responsible for the synthesis of proteins in the cell. The sequence is that of Small ribosomal subunit protein uS9 (rps16) from Ictalurus punctatus (Channel catfish).